We begin with the raw amino-acid sequence, 248 residues long: Anamorsin homolog (248 aa).

An N-terminal SAM-like domain region spans residues 4-129 (FKGLQKSLYI…ETGSSARLSF (126 aa)). The segment at 130–161 (AKKNASAVNVWKISGDDEELIDEEELLDEEDK) is linker. Positions 172, 181, 184, and 186 each coordinate [2Fe-2S] cluster. Residues 172–186 (CSTTGKRKACKNCSC) form a fe-S binding site A region. Residues C209, C212, C220, and C223 each contribute to the [4Fe-4S] cluster site. 2 short sequence motifs (cx2C motif) span residues 209–212 (CGNC) and 220–223 (CSTC). A fe-S binding site B region spans residues 209–223 (CGNCYLGDAFRCSTC).

It belongs to the anamorsin family. As to quaternary structure, monomer. The cofactor is [2Fe-2S] cluster. [4Fe-4S] cluster is required as a cofactor.

The protein localises to the cytoplasm. Its subcellular location is the mitochondrion intermembrane space. Its function is as follows. Component of the cytosolic iron-sulfur (Fe-S) protein assembly (CIA) machinery. Required for the maturation of extramitochondrial Fe-S proteins. Part of an electron transfer chain functioning in an early step of cytosolic Fe-S biogenesis, facilitating the de novo assembly of a [4Fe-4S] cluster on the cytosolic Fe-S scaffold complex. Electrons are transferred from NADPH via a FAD- and FMN-containing diflavin oxidoreductase. Together with the diflavin oxidoreductase, also required for the assembly of the diferric tyrosyl radical cofactor of ribonucleotide reductase (RNR), probably by providing electrons for reduction during radical cofactor maturation in the catalytic small subunit. The protein is Anamorsin homolog of Drosophila yakuba (Fruit fly).